Reading from the N-terminus, the 214-residue chain is Probable transaldolase (214 aa).

K83 serves as the catalytic Schiff-base intermediate with substrate.

The protein belongs to the transaldolase family. Type 3B subfamily.

The protein localises to the cytoplasm. The catalysed reaction is D-sedoheptulose 7-phosphate + D-glyceraldehyde 3-phosphate = D-erythrose 4-phosphate + beta-D-fructose 6-phosphate. It functions in the pathway carbohydrate degradation; pentose phosphate pathway; D-glyceraldehyde 3-phosphate and beta-D-fructose 6-phosphate from D-ribose 5-phosphate and D-xylulose 5-phosphate (non-oxidative stage): step 2/3. Its function is as follows. Transaldolase is important for the balance of metabolites in the pentose-phosphate pathway. The polypeptide is Probable transaldolase (Geobacter sp. (strain M21)).